Reading from the N-terminus, the 967-residue chain is Probable serine/threonine-protein kinase DDB_G0290621 (967 aa).

Disordered stretches follow at residues Glu65 to Glu122, Ser215 to Ser251, and Gln287 to Thr326. A compositionally biased stretch (acidic residues) spans Asp66–Asp94. The span at Asp95–Glu122 shows a compositional bias: basic and acidic residues. Low complexity predominate over residues Gln297–Thr326. Residues Phe345–Ile610 enclose the Protein kinase domain. ATP-binding positions include Ile351–Ile359 and Lys368. The active-site Proton acceptor is Asp467. 3 disordered regions span residues Asp634 to Asn667, Ser700 to Ile752, and Thr862 to Asn882. The span at Asn639–Asn666 shows a compositional bias: low complexity. Low complexity predominate over residues Ser863 to Asn882.

This sequence belongs to the protein kinase superfamily. TKL Ser/Thr protein kinase family.

It catalyses the reaction L-seryl-[protein] + ATP = O-phospho-L-seryl-[protein] + ADP + H(+). It carries out the reaction L-threonyl-[protein] + ATP = O-phospho-L-threonyl-[protein] + ADP + H(+). The sequence is that of Probable serine/threonine-protein kinase DDB_G0290621 from Dictyostelium discoideum (Social amoeba).